We begin with the raw amino-acid sequence, 398 residues long: Methionine aminopeptidase 1A (398 aa).

N-acetylalanine is present on Ala-2. A C6H2-type zinc finger spans residues 12–65 (TLSCARCEKPAHLQCPKCIDLKLPREQASFCTQECFKAAWSSHKSVHVKAQLSS). Residues Cys-15, Cys-18, Cys-26, Cys-29, Cys-42, Cys-46, His-54, and His-58 each coordinate Zn(2+). His-214 serves as a coordination point for a protein. Asp-231, Asp-242, and His-305 together coordinate Zn(2+). His-312 lines the a protein pocket. Positions 338 and 369 each coordinate Zn(2+).

Belongs to the peptidase M24A family. Methionine aminopeptidase type 1 subfamily. Associates with the 60S ribosomal subunit of the 80S translational complex. Zn(2+) is required as a cofactor. It depends on Co(2+) as a cofactor. Mn(2+) serves as cofactor. Requires Fe(2+) as cofactor. Ubiquitous.

The protein resides in the cytoplasm. The enzyme catalyses Release of N-terminal amino acids, preferentially methionine, from peptides and arylamides.. Functionally, cotranslationally removes the N-terminal methionine from nascent proteins. The N-terminal methionine is often cleaved when the second residue in the primary sequence is small and uncharged (Met-Ala-, Cys, Gly, Pro, Ser, Thr, or Val). This is Methionine aminopeptidase 1A (MAP1A) from Arabidopsis thaliana (Mouse-ear cress).